Reading from the N-terminus, the 291-residue chain is ATP synthase gamma chain (291 aa).

This sequence belongs to the ATPase gamma chain family. F-type ATPases have 2 components, CF(1) - the catalytic core - and CF(0) - the membrane proton channel. CF(1) has five subunits: alpha(3), beta(3), gamma(1), delta(1), epsilon(1). CF(0) has three main subunits: a, b and c.

The protein resides in the cell inner membrane. In terms of biological role, produces ATP from ADP in the presence of a proton gradient across the membrane. The gamma chain is believed to be important in regulating ATPase activity and the flow of protons through the CF(0) complex. The sequence is that of ATP synthase gamma chain from Burkholderia multivorans (strain ATCC 17616 / 249).